Here is a 146-residue protein sequence, read N- to C-terminus: Large ribosomal subunit protein uL15 (146 aa).

The span at 1-13 (MKLNELKPNEGSR) shows a compositional bias: basic and acidic residues. Residues 1 to 54 (MKLNELKPNEGSRRNRKRVGRGTSSGYGKTAGRGQKGQLARTGGKTRLGFEGGQ) are disordered. Residues 23-35 (TSSGYGKTAGRGQ) show a composition bias toward gly residues.

It belongs to the universal ribosomal protein uL15 family. In terms of assembly, part of the 50S ribosomal subunit.

Functionally, binds to the 23S rRNA. In Lactobacillus gasseri (strain ATCC 33323 / DSM 20243 / BCRC 14619 / CIP 102991 / JCM 1131 / KCTC 3163 / NCIMB 11718 / NCTC 13722 / AM63), this protein is Large ribosomal subunit protein uL15.